Consider the following 465-residue polypeptide: UDP-N-acetylmuramoylalanine--D-glutamate ligase (465 aa).

Position 127–133 (127–133) interacts with ATP; sequence GSNGKST.

This sequence belongs to the MurCDEF family.

It localises to the cytoplasm. It carries out the reaction UDP-N-acetyl-alpha-D-muramoyl-L-alanine + D-glutamate + ATP = UDP-N-acetyl-alpha-D-muramoyl-L-alanyl-D-glutamate + ADP + phosphate + H(+). It functions in the pathway cell wall biogenesis; peptidoglycan biosynthesis. Functionally, cell wall formation. Catalyzes the addition of glutamate to the nucleotide precursor UDP-N-acetylmuramoyl-L-alanine (UMA). In Cereibacter sphaeroides (strain KD131 / KCTC 12085) (Rhodobacter sphaeroides), this protein is UDP-N-acetylmuramoylalanine--D-glutamate ligase.